The primary structure comprises 188 residues: Large ribosomal subunit protein eL18B (188 aa).

Positions 153-188 (GKAPGTPHSRTKPYVLSKGRKFERARGRRASRGYKN) are disordered. Basic residues predominate over residues 178–188 (RGRRASRGYKN).

This sequence belongs to the eukaryotic ribosomal protein eL18 family. In terms of assembly, component of the large ribosomal subunit.

It is found in the cytoplasm. Its subcellular location is the cytosol. It localises to the rough endoplasmic reticulum. Functionally, component of the large ribosomal subunit. The ribosome is a large ribonucleoprotein complex responsible for the synthesis of proteins in the cell. The polypeptide is Large ribosomal subunit protein eL18B (rpl18-b) (Xenopus laevis (African clawed frog)).